A 307-amino-acid chain; its full sequence is MDLILLVGIAVALLVILATLYFLQNKNKAAGEAKPAAAAPRRGVPQRAQEGVPRRAQIARNQRNRLQQNAPAPAPEAVAPAAAGDSDDDEENVGADGARLPQGAVLNEKMGAKKRAKMEAKEQKRLQREHELQEREKRKVKEAKEDAERKQQEEVEAEAERKKLDAERLAKEERERKEHEEYLKMKAAFNVEEEGFEEGDADDQESLLADFIQYIKDNKVVLLEDLAVAFKLKTQQAIERIQELQANGSLTGVIDDRGKFIYISQEELAAVAKFIKQRGRVSIAELAESSNNLINLTPVQSAAGGDS.

Topologically, residues methionine 1–aspartate 2 are lumenal. Residues leucine 3–leucine 23 form a helical membrane-spanning segment. Over glutamine 24 to serine 307 the chain is Cytoplasmic. 2 stretches are compositionally biased toward low complexity: residues glutamate 32–glycine 43 and arginine 54–alanine 83. A disordered region spans residues glutamate 32 to lysine 162. Residues lysine 117–lysine 162 are compositionally biased toward basic and acidic residues.

It belongs to the DDRGK1 family. Interacts with Atg9; the interaction is transient.

The protein resides in the endoplasmic reticulum membrane. Its function is as follows. Substrate adapter for ufmylation, the covalent attachment of the ubiquitin-like modifier UFM1 to substrate proteins. Required for ufmylation of Atg9; protects the nervous system during aging, possibly by stabilizing Atg9 and supporting its function. The chain is DDRGK domain-containing protein 1 from Drosophila willistoni (Fruit fly).